A 431-amino-acid chain; its full sequence is Phosphoribosylamine--glycine ligase (431 aa).

The ATP-grasp domain maps to 109-316; that stretch reads KDFLARHGIP…LVDLLEAAID (208 aa). 135–196 is an ATP binding site; sequence VREKGTPIVV…EEFLDGEEAS (62 aa). Mg(2+)-binding residues include E286 and N288.

Belongs to the GARS family. Mg(2+) serves as cofactor. Mn(2+) is required as a cofactor.

It carries out the reaction 5-phospho-beta-D-ribosylamine + glycine + ATP = N(1)-(5-phospho-beta-D-ribosyl)glycinamide + ADP + phosphate + H(+). It functions in the pathway purine metabolism; IMP biosynthesis via de novo pathway; N(1)-(5-phospho-D-ribosyl)glycinamide from 5-phospho-alpha-D-ribose 1-diphosphate: step 2/2. This chain is Phosphoribosylamine--glycine ligase, found in Xanthomonas axonopodis pv. citri (strain 306).